Consider the following 157-residue polypeptide: dCTP deaminase (157 aa).

DCTP-binding positions include 79 to 84 (RSSLAR), aspartate 95, glutamine 124, and tyrosine 138.

It belongs to the dCTP deaminase family. In terms of assembly, homotrimer.

It catalyses the reaction dCTP + H2O + H(+) = dUTP + NH4(+). It participates in pyrimidine metabolism; dUMP biosynthesis; dUMP from dCTP (dUTP route): step 1/2. Catalyzes the deamination of dCTP to dUTP. This Thermococcus gammatolerans (strain DSM 15229 / JCM 11827 / EJ3) protein is dCTP deaminase.